A 456-amino-acid chain; its full sequence is tRNA-2-methylthio-N(6)-dimethylallyladenosine synthase (456 aa).

Positions 6–125 (KRLFIKTYGC…LPELIAQAHR (120 aa)) constitute an MTTase N-terminal domain. Cys-15, Cys-51, Cys-88, Cys-163, Cys-167, and Cys-170 together coordinate [4Fe-4S] cluster. The Radical SAM core domain maps to 149–385 (QVEGYSAFVT…QELLSDQQAA (237 aa)). The region spanning 388 to 450 (ESMIGRTLPV…RNSLSGSLTG (63 aa)) is the TRAM domain.

This sequence belongs to the methylthiotransferase family. MiaB subfamily. In terms of assembly, monomer. Requires [4Fe-4S] cluster as cofactor.

Its subcellular location is the cytoplasm. It carries out the reaction N(6)-dimethylallyladenosine(37) in tRNA + (sulfur carrier)-SH + AH2 + 2 S-adenosyl-L-methionine = 2-methylsulfanyl-N(6)-dimethylallyladenosine(37) in tRNA + (sulfur carrier)-H + 5'-deoxyadenosine + L-methionine + A + S-adenosyl-L-homocysteine + 2 H(+). In terms of biological role, catalyzes the methylthiolation of N6-(dimethylallyl)adenosine (i(6)A), leading to the formation of 2-methylthio-N6-(dimethylallyl)adenosine (ms(2)i(6)A) at position 37 in tRNAs that read codons beginning with uridine. The polypeptide is tRNA-2-methylthio-N(6)-dimethylallyladenosine synthase (Maricaulis maris (strain MCS10) (Caulobacter maris)).